We begin with the raw amino-acid sequence, 248 residues long: Large ribosomal subunit protein uL4 (248 aa).

The tract at residues 45 to 105 (PYGADPYAGM…KDQSKSVNTK (61 aa)) is disordered. The segment covering 92 to 105 (PKAEKDQSKSVNTK) has biased composition (basic and acidic residues).

Belongs to the universal ribosomal protein uL4 family. Part of the 50S ribosomal subunit.

In terms of biological role, one of the primary rRNA binding proteins, this protein initially binds near the 5'-end of the 23S rRNA. It is important during the early stages of 50S assembly. It makes multiple contacts with different domains of the 23S rRNA in the assembled 50S subunit and ribosome. Its function is as follows. Forms part of the polypeptide exit tunnel. This Haloquadratum walsbyi (strain DSM 16790 / HBSQ001) protein is Large ribosomal subunit protein uL4.